Here is a 305-residue protein sequence, read N- to C-terminus: tRNA dimethylallyltransferase (305 aa).

12–19 (GPTASGKT) contributes to the ATP binding site. Substrate is bound at residue 14–19 (TASGKT). Interaction with substrate tRNA regions lie at residues 37 to 40 (DSAL), 161 to 165 (QRLAR), and 242 to 247 (RCVGYR).

This sequence belongs to the IPP transferase family. In terms of assembly, monomer. The cofactor is Mg(2+).

The catalysed reaction is adenosine(37) in tRNA + dimethylallyl diphosphate = N(6)-dimethylallyladenosine(37) in tRNA + diphosphate. In terms of biological role, catalyzes the transfer of a dimethylallyl group onto the adenine at position 37 in tRNAs that read codons beginning with uridine, leading to the formation of N6-(dimethylallyl)adenosine (i(6)A). In Psychromonas ingrahamii (strain DSM 17664 / CCUG 51855 / 37), this protein is tRNA dimethylallyltransferase.